The sequence spans 554 residues: CTP synthase (554 aa).

The amidoligase domain stretch occupies residues 1–279; that stretch reads MSQPRAEHVT…DAFLIRRLDL (279 aa). Serine 21 serves as a coordination point for CTP. Serine 21 provides a ligand contact to UTP. Residues 22–27 and aspartate 79 each bind ATP; that span reads SLGKGL. The Mg(2+) site is built by aspartate 79 and glutamate 153. Residues 160-162, 200-205, and lysine 236 contribute to the CTP site; these read DIE and KTKPTQ. UTP is bound by residues 200 to 205 and lysine 236; that span reads KTKPTQ. Residues 304 to 551 enclose the Glutamine amidotransferase type-1 domain; that stretch reads TVALVGKYID…VKAGLKHKND (248 aa). Residue glycine 367 participates in L-glutamine binding. The Nucleophile; for glutamine hydrolysis role is filled by cysteine 394. L-glutamine contacts are provided by residues 395–398, glutamate 417, and arginine 478; that span reads LGLQ. Residues histidine 524 and glutamate 526 contribute to the active site.

Belongs to the CTP synthase family. Homotetramer.

It catalyses the reaction UTP + L-glutamine + ATP + H2O = CTP + L-glutamate + ADP + phosphate + 2 H(+). The catalysed reaction is L-glutamine + H2O = L-glutamate + NH4(+). It carries out the reaction UTP + NH4(+) + ATP = CTP + ADP + phosphate + 2 H(+). It participates in pyrimidine metabolism; CTP biosynthesis via de novo pathway; CTP from UDP: step 2/2. Allosterically activated by GTP, when glutamine is the substrate; GTP has no effect on the reaction when ammonia is the substrate. The allosteric effector GTP functions by stabilizing the protein conformation that binds the tetrahedral intermediate(s) formed during glutamine hydrolysis. Inhibited by the product CTP, via allosteric rather than competitive inhibition. Functionally, catalyzes the ATP-dependent amination of UTP to CTP with either L-glutamine or ammonia as the source of nitrogen. Regulates intracellular CTP levels through interactions with the four ribonucleotide triphosphates. The sequence is that of CTP synthase from Corynebacterium kroppenstedtii (strain DSM 44385 / JCM 11950 / CIP 105744 / CCUG 35717).